A 565-amino-acid chain; its full sequence is MSEALERLIDQGVGREPADIVLKGGRFFDLVTGELVASDIAISGERIVGTCGDYEGREEIDVTGRIVVPGFIDTHLHIESSLVTPHEFDRCVLPLGITTVVCDPHEIANVLGTEGIQYFLDSAMETVMDIRVQLSSCVPATHLETSGADLPVGRLTPFRHHPKVIGLAEFMNFPGVVNKDPVCLAKLDAFQDGHIDGHAPLLRGKELNGYLAAGIRTDHECTSAEEALEKIRKGMHILVREGSVSKDLQALMPILTERLSPYLALCTDDRNPLDIAEQGHLDNMIRTAISAGVEPLAIYRAASISAARAFGLRDRGLVAPGWRADLVIVDSLENCKAELVLSAGRRVTDALFAGRKPVEPVGLDSVKAREVKAADFGLPYNEGETSVLGVLPGKIITEHRRYRLPAEGNRTGVDLDRDIIKVAVIERHGVNGNHANGFVQGFGLKKGAIASTVGHDSHNICVVGVNDDDMALAVNRLGEIKGGFVVVHDGKVTGEIALPVAGLMSLEPYERVRDTLHHLRQAAFALGATLEEPFLQLAFLPLPVIPHLKISDRGLVDVDRFMLIG.

It belongs to the metallo-dependent hydrolases superfamily. Adenine deaminase family. The cofactor is Mn(2+).

The catalysed reaction is adenine + H2O + H(+) = hypoxanthine + NH4(+). The polypeptide is Adenine deaminase 1 (Rhizobium meliloti (strain 1021) (Ensifer meliloti)).